The chain runs to 592 residues: Alpha-1,3-galactosidase B (592 aa).

A signal peptide spans 1 to 14 (MKLLSVLSLSLVLS). Cys15 carries the N-palmitoyl cysteine lipid modification. Cys15 is lipidated: S-diacylglycerol cysteine. PbH1 repeat units follow at residues 429–451 (TPEV…LFST), 452–474 (PRKT…LLCG), and 485–538 (CRHV…VIED).

Belongs to the glycosyl hydrolase 110 family. B subfamily.

The protein resides in the cell membrane. The enzyme catalyses Hydrolysis of terminal, non-reducing branched (1-&gt;3)-alpha-D-galactosidic residues, producing free D-galactose.. It catalyses the reaction Hydrolysis of terminal, non-reducing linear (1-&gt;3)-alpha-D-galactosidic residues, producing free D-galactose.. The catalysed reaction is Hydrolysis of terminal, non-reducing alpha-D-galactose residues in alpha-D-galactosides, including galactose oligosaccharides, galactomannans and galactolipids.. Its function is as follows. Alpha-galactosidase. Removes both branched alpha-1,3-linked galactose residues of blood group B antigens and linear alpha-1,3-linked galactose structures. This chain is Alpha-1,3-galactosidase B (glaB1), found in Phocaeicola vulgatus (strain ATCC 8482 / DSM 1447 / JCM 5826 / CCUG 4940 / NBRC 14291 / NCTC 11154) (Bacteroides vulgatus).